Here is a 741-residue protein sequence, read N- to C-terminus: Catalase-peroxidase (741 aa).

The first 21 residues, 1–21 (MRNFRRFTIALLVLFLGPIGA), serve as a signal peptide directing secretion. The segment at residues 109 to 231 (WHSAGTYRIS…LAAVQMGLIY (123 aa)) is a cross-link (tryptophyl-tyrosyl-methioninium (Trp-Tyr) (with M-257)). The active-site Proton acceptor is H110. A cross-link (tryptophyl-tyrosyl-methioninium (Tyr-Met) (with W-109)) is located at residues 231-257 (YVNPEGPNGNPDPLAAAKDIRETFGRM). A heme b-binding site is contributed by H272.

Belongs to the peroxidase family. Peroxidase/catalase subfamily. Homodimer or homotetramer. Heme b is required as a cofactor. Post-translationally, formation of the three residue Trp-Tyr-Met cross-link is important for the catalase, but not the peroxidase activity of the enzyme.

It catalyses the reaction H2O2 + AH2 = A + 2 H2O. The catalysed reaction is 2 H2O2 = O2 + 2 H2O. Functionally, bifunctional enzyme with both catalase and broad-spectrum peroxidase activity. This Leptospira biflexa serovar Patoc (strain Patoc 1 / Ames) protein is Catalase-peroxidase.